We begin with the raw amino-acid sequence, 188 residues long: Threonylcarbamoyl-AMP synthase (188 aa).

Residues 4–188 (VENLQQAVDA…ARSLQVLRQG (185 aa)) form the YrdC-like domain.

This sequence belongs to the SUA5 family. TsaC subfamily.

The protein localises to the cytoplasm. The enzyme catalyses L-threonine + hydrogencarbonate + ATP = L-threonylcarbamoyladenylate + diphosphate + H2O. In terms of biological role, required for the formation of a threonylcarbamoyl group on adenosine at position 37 (t(6)A37) in tRNAs that read codons beginning with adenine. Catalyzes the conversion of L-threonine, HCO(3)(-)/CO(2) and ATP to give threonylcarbamoyl-AMP (TC-AMP) as the acyladenylate intermediate, with the release of diphosphate. The chain is Threonylcarbamoyl-AMP synthase from Vibrio cholerae serotype O1 (strain ATCC 39541 / Classical Ogawa 395 / O395).